A 342-amino-acid polypeptide reads, in one-letter code: MTETIKTDVLIVGAGPCGLFAVFELGLLDIKTHLVDILDKVGGQCAELYPEKPIYDIPGVPMITGHGLTEALMEQIKPFNPTIHLNEMIESVEKIGDPEFRVTTNAGTVFECKVLVVAAGGGSFQPKRPPVPGVEAYEGKSVHYAVRKMEEFRGKDIVIVGGGDSALDWTLNLNPICKSMTLVHRRDDFRGAPHSVEQMRQLVASGKLDLKIGQITELQGEDGQLSGATIKLNGNSIAQIKCDAMLPFFGLTMKLGPVANWGLQLENNLIPVDTGTFETNVPGIFAIGDINTYPGKLKLILSGFHEGALMAQKAVKYVYPDKRVVFQYTTSSTNLQKKLGVN.

Positions 17, 36, 44, 49, 89, 124, 289, and 330 each coordinate FAD.

The protein belongs to the ferredoxin--NADP reductase type 2 family. In terms of assembly, homodimer. FAD serves as cofactor.

The catalysed reaction is 2 reduced [2Fe-2S]-[ferredoxin] + NADP(+) + H(+) = 2 oxidized [2Fe-2S]-[ferredoxin] + NADPH. This chain is Ferredoxin--NADP reductase, found in Rhodopseudomonas palustris (strain HaA2).